The chain runs to 401 residues: Probable 2,3-bisphosphoglycerate-independent phosphoglycerate mutase (401 aa).

This sequence belongs to the BPG-independent phosphoglycerate mutase family. A-PGAM subfamily.

The catalysed reaction is (2R)-2-phosphoglycerate = (2R)-3-phosphoglycerate. It functions in the pathway carbohydrate degradation; glycolysis; pyruvate from D-glyceraldehyde 3-phosphate: step 3/5. In terms of biological role, catalyzes the interconversion of 2-phosphoglycerate and 3-phosphoglycerate. This Thermotoga petrophila (strain ATCC BAA-488 / DSM 13995 / JCM 10881 / RKU-1) protein is Probable 2,3-bisphosphoglycerate-independent phosphoglycerate mutase.